The following is a 1108-amino-acid chain: Retinal guanylyl cyclase 2 (1108 aa).

Residues 1–50 (MFLGPWPFSRLLSWFAISSRLSGQHGLTSSKFLRYLCLLALLPLIWWGQA) form the signal peptide. Residues 51 to 465 (LPYKIGVIGP…QGKICQGGID (415 aa)) lie on the Extracellular side of the membrane. Residues cysteine 104 and cysteine 132 are joined by a disulfide bond. A helical membrane pass occupies residues 466–490 (PALAMMVCFALLLALLSINGFAYFI). At 491–1108 (RRRINKIQLI…AERQLVRNKP (618 aa)) the chain is on the cytoplasmic side. In terms of domain architecture, Protein kinase spans 532-812 (FQIISEVQSG…DEIFNQFKTF (281 aa)). Residues 884 to 1014 (TLYFSDIVGF…DTVNTASRME (131 aa)) form the Guanylate cyclase domain.

This sequence belongs to the adenylyl cyclase class-4/guanylyl cyclase family. Homodimer. Interacts with RD3; promotes the exit of GUCY2F from the endoplasmic reticulum and its trafficking to the photoreceptor outer segments. In terms of processing, there are 9 conserved cysteine residues in sensory guanylate cyclases, 6 in the extracellular domain, which may be involved in intra- or interchain disulfide bonds. As to expression, expressed only in the eye.

The protein localises to the membrane. The protein resides in the photoreceptor outer segment membrane. It catalyses the reaction GTP = 3',5'-cyclic GMP + diphosphate. With respect to regulation, activated by GUCA1B when free calcium ions concentration is low, and inhibited by GUCA1B when free calcium ions concentration is high. Inhibited by RD3. In terms of biological role, responsible for the synthesis of cyclic GMP (cGMP) in rods and cones of photoreceptors. Plays an essential role in phototransduction, by mediating cGMP replenishment. May also participate in the trafficking of membrane-asociated proteins to the photoreceptor outer segment membrane. This is Retinal guanylyl cyclase 2 (Gucy2f) from Rattus norvegicus (Rat).